The following is a 190-amino-acid chain: Pyridoxal 5'-phosphate synthase subunit PdxT (190 aa).

L-glutamine is bound at residue 46–48; that stretch reads GES. Residue cysteine 78 is the Nucleophile of the active site. L-glutamine contacts are provided by residues arginine 106 and 135–136; that span reads IR. Active-site charge relay system residues include histidine 171 and glutamate 173.

It belongs to the glutaminase PdxT/SNO family. As to quaternary structure, in the presence of PdxS, forms a dodecamer of heterodimers. Only shows activity in the heterodimer.

It catalyses the reaction aldehydo-D-ribose 5-phosphate + D-glyceraldehyde 3-phosphate + L-glutamine = pyridoxal 5'-phosphate + L-glutamate + phosphate + 3 H2O + H(+). It carries out the reaction L-glutamine + H2O = L-glutamate + NH4(+). Its pathway is cofactor biosynthesis; pyridoxal 5'-phosphate biosynthesis. Functionally, catalyzes the hydrolysis of glutamine to glutamate and ammonia as part of the biosynthesis of pyridoxal 5'-phosphate. The resulting ammonia molecule is channeled to the active site of PdxS. The polypeptide is Pyridoxal 5'-phosphate synthase subunit PdxT (Dictyoglomus turgidum (strain DSM 6724 / Z-1310)).